A 205-amino-acid polypeptide reads, in one-letter code: Pyridoxal 5'-phosphate synthase subunit PdxT (205 aa).

54–56 is an L-glutamine binding site; the sequence is GES. Cys-86 functions as the Nucleophile in the catalytic mechanism. Residues Arg-118 and 147–148 each bind L-glutamine; that span reads IR. Catalysis depends on charge relay system residues His-183 and Glu-185.

The protein belongs to the glutaminase PdxT/SNO family. In the presence of PdxS, forms a dodecamer of heterodimers. Only shows activity in the heterodimer.

It catalyses the reaction aldehydo-D-ribose 5-phosphate + D-glyceraldehyde 3-phosphate + L-glutamine = pyridoxal 5'-phosphate + L-glutamate + phosphate + 3 H2O + H(+). The enzyme catalyses L-glutamine + H2O = L-glutamate + NH4(+). It participates in cofactor biosynthesis; pyridoxal 5'-phosphate biosynthesis. Functionally, catalyzes the hydrolysis of glutamine to glutamate and ammonia as part of the biosynthesis of pyridoxal 5'-phosphate. The resulting ammonia molecule is channeled to the active site of PdxS. In Nitrosopumilus maritimus (strain SCM1), this protein is Pyridoxal 5'-phosphate synthase subunit PdxT.